Reading from the N-terminus, the 35-residue chain is Mu-theraphotoxin-Ca2a (35 aa).

Intrachain disulfides connect C2-C17, C9-C24, and C16-C31.

This sequence belongs to the neurotoxin 10 (Hwtx-1) family. 10 (haplotoxin-1) subfamily. Expressed by the venom gland.

The protein localises to the secreted. In terms of biological role, potently inhibits Nav1.7/SCN9A (IC(50)=98.1 nM), and moderately inhibits Nav1.2/SCN2A (IC(50)=216.3 nM), Nav1.6/SCN8A (IC(50)=313.6 nM), and Nav1.3/SCN3A (IC(50)=491.3 nM). Hyperpolarizes the slow inactivation, but does not alter the voltage-dependent activation or fast inactivation of Nav1.7/SCN9A. Binds with Nav1.7/SCN9A at the extracellular S3-S4 linker of domain II (site 4). In vivo, exhibits dose-dependent analgesic efficacy by reducing pain responses in rodent models of formalin-induced paw licking, hot plate test, and acetic acid-induced writhing. The polypeptide is Mu-theraphotoxin-Ca2a (Cyriopagopus albostriatus (Cambodian tiger tarantula)).